Here is a 763-residue protein sequence, read N- to C-terminus: Phosphoglycerol transferase I (763 aa).

Transmembrane regions (helical) follow at residues 1 to 21 (MSEL…AWKA), 26 to 46 (WWFA…ITLF), 77 to 97 (ILPG…LGWI), and 108 to 128 (FGYS…SPAF).

Belongs to the OpgB family.

It localises to the cell inner membrane. The catalysed reaction is a phosphatidylglycerol + a membrane-derived-oligosaccharide D-glucose = a 1,2-diacyl-sn-glycerol + a membrane-derived-oligosaccharide 6-(glycerophospho)-D-glucose.. It participates in glycan metabolism; osmoregulated periplasmic glucan (OPG) biosynthesis. In terms of biological role, transfers a phosphoglycerol residue from phosphatidylglycerol to the membrane-bound nascent glucan backbones. In Escherichia coli O17:K52:H18 (strain UMN026 / ExPEC), this protein is Phosphoglycerol transferase I.